Here is a 767-residue protein sequence, read N- to C-terminus: 5-methyltetrahydropteroyltriglutamate--homocysteine methyltransferase (767 aa).

K126 is a 5-methyltetrahydropteroyltri-L-glutamate binding site. L-homocysteine-binding positions include 445 to 447 and E498; that span reads IGS. Residues 445–447 and E498 contribute to the L-methionine site; that span reads IGS. 5-methyltetrahydropteroyltri-L-glutamate is bound by residues 529 to 530 and W575; that span reads RC. D613 contacts L-homocysteine. L-methionine is bound at residue D613. E619 is a 5-methyltetrahydropteroyltri-L-glutamate binding site. Zn(2+)-binding residues include H655, C657, and E679. H708 (proton donor) is an active-site residue. C740 is a Zn(2+) binding site.

This sequence belongs to the vitamin-B12 independent methionine synthase family. Zn(2+) serves as cofactor.

It carries out the reaction 5-methyltetrahydropteroyltri-L-glutamate + L-homocysteine = tetrahydropteroyltri-L-glutamate + L-methionine. Its pathway is amino-acid biosynthesis; L-methionine biosynthesis via de novo pathway; L-methionine from L-homocysteine (MetE route): step 1/1. Functionally, catalyzes the transfer of a methyl group from 5-methyltetrahydrofolate to homocysteine resulting in methionine formation. The protein is 5-methyltetrahydropteroyltriglutamate--homocysteine methyltransferase of Psychromonas ingrahamii (strain DSM 17664 / CCUG 51855 / 37).